A 91-amino-acid polypeptide reads, in one-letter code: Large ribosomal subunit protein eL43 (91 aa).

The C4-type zinc finger occupies 39 to 60 (CSFCGKEAMKRKATGIWNCAKC).

This sequence belongs to the eukaryotic ribosomal protein eL43 family.

The polypeptide is Large ribosomal subunit protein eL43 (Caenorhabditis elegans).